The following is a 511-amino-acid chain: UDP-N-acetylmuramoyl-L-alanyl-D-glutamate--2,6-diaminopimelate ligase (511 aa).

S30 is a UDP-N-acetyl-alpha-D-muramoyl-L-alanyl-D-glutamate binding site. An ATP-binding site is contributed by 110–116; that stretch reads GTNGKTT. Residues 152–153, S179, Q185, and R187 contribute to the UDP-N-acetyl-alpha-D-muramoyl-L-alanyl-D-glutamate site; that span reads TT. Residue K219 is modified to N6-carboxylysine. Residues R385, 409–412, G476, and E480 each bind meso-2,6-diaminopimelate; that span reads DNPR. The short motif at 409–412 is the Meso-diaminopimelate recognition motif element; that stretch reads DNPR.

Belongs to the MurCDEF family. MurE subfamily. Mg(2+) is required as a cofactor. In terms of processing, carboxylation is probably crucial for Mg(2+) binding and, consequently, for the gamma-phosphate positioning of ATP.

It localises to the cytoplasm. The enzyme catalyses UDP-N-acetyl-alpha-D-muramoyl-L-alanyl-D-glutamate + meso-2,6-diaminopimelate + ATP = UDP-N-acetyl-alpha-D-muramoyl-L-alanyl-gamma-D-glutamyl-meso-2,6-diaminopimelate + ADP + phosphate + H(+). It functions in the pathway cell wall biogenesis; peptidoglycan biosynthesis. Functionally, catalyzes the addition of meso-diaminopimelic acid to the nucleotide precursor UDP-N-acetylmuramoyl-L-alanyl-D-glutamate (UMAG) in the biosynthesis of bacterial cell-wall peptidoglycan. This chain is UDP-N-acetylmuramoyl-L-alanyl-D-glutamate--2,6-diaminopimelate ligase, found in Geobacter metallireducens (strain ATCC 53774 / DSM 7210 / GS-15).